The sequence spans 315 residues: Olfactory receptor 4E1 (315 aa).

Residues 1–33 (MEEAILLNQTSLVTYFRLRGLSVNHKARIAMFS) lie on the Extracellular side of the membrane. N-linked (GlcNAc...) asparagine glycosylation is present at Asn-8. A helical membrane pass occupies residues 34 to 54 (MFLIFYVLTLIGNVLIVITII). Residues 55 to 61 (YDHRLHT) are Cytoplasmic-facing. A helical membrane pass occupies residues 62–82 (PMYFFLSNLSFIDVCHSTVTV). At 83–101 (PKMLRDVWSEEKLISFDAC) the chain is on the extracellular side. Residues Cys-101 and Cys-183 are joined by a disulfide bond. Residues 102-122 (VTQMFFLHLFACTEIFLLTVM) form a helical membrane-spanning segment. The Cytoplasmic segment spans residues 123–143 (AYDRYVAICKPLQYMIVMNWK). The chain crosses the membrane as a helical span at residues 144–164 (VCVLLAVALWTGGTIHSIALT). Residues 165–208 (SLTIKLPYCGPDEIDNFFCDVPQVIKLACIDTHVIEILIVSNSG) are Extracellular-facing. A helical membrane pass occupies residues 209-229 (LISVVCFVVLVVSYAVILVSL). Residues 230–240 (RQQISKGKRKA) are Cytoplasmic-facing. The chain crosses the membrane as a helical span at residues 241-261 (LSTCAAHLTVVTLFLGHCIFI). Residues 262-272 (YSRPSTSLPED) are Extracellular-facing. Residues 273–293 (KVVSVFFTAVTPLLNPIIYTL) form a helical membrane-spanning segment. At 294–315 (RNEEMKSALNKLVGRKERKEEK) the chain is on the cytoplasmic side.

Belongs to the G-protein coupled receptor 1 family.

Its subcellular location is the cell membrane. Functionally, odorant receptor. The sequence is that of Olfactory receptor 4E1 (OR4E1) from Homo sapiens (Human).